The following is a 446-amino-acid chain: Probable D-serine dehydratase (446 aa).

An N6-(pyridoxal phosphate)lysine modification is found at K116.

This sequence belongs to the serine/threonine dehydratase family. DsdA subfamily. Requires pyridoxal 5'-phosphate as cofactor.

It carries out the reaction D-serine = pyruvate + NH4(+). This chain is Probable D-serine dehydratase, found in Bacillus anthracis (strain CDC 684 / NRRL 3495).